We begin with the raw amino-acid sequence, 161 residues long: Ribonuclease P protein component (161 aa).

The tract at residues 1 to 20 (MPDELRAEKSFPSKPYDSLK) is disordered.

It belongs to the RnpA family. Consists of a catalytic RNA component (M1 or rnpB) and a protein subunit.

The enzyme catalyses Endonucleolytic cleavage of RNA, removing 5'-extranucleotides from tRNA precursor.. RNaseP catalyzes the removal of the 5'-leader sequence from pre-tRNA to produce the mature 5'-terminus. It can also cleave other RNA substrates such as 4.5S RNA. The protein component plays an auxiliary but essential role in vivo by binding to the 5'-leader sequence and broadening the substrate specificity of the ribozyme. The chain is Ribonuclease P protein component from Helicobacter pylori (strain P12).